The primary structure comprises 343 residues: Flap endonuclease 1 (343 aa).

The N-domain stretch occupies residues 1–98 (MGVPIGDLVP…KELEKRREAR (98 aa)). The Mg(2+) site is built by Asp27, Asp80, Glu152, Glu154, Asp173, Asp175, and Asp236. The tract at residues 116–258 (EARKYAQRAT…KALEIVRYSR (143 aa)) is I-domain. The segment at 330-338 (RQSTLESWF) is interaction with PCNA.

It belongs to the XPG/RAD2 endonuclease family. FEN1 subfamily. Interacts with PCNA. PCNA stimulates the nuclease activity without altering cleavage specificity. It depends on Mg(2+) as a cofactor.

Its function is as follows. Structure-specific nuclease with 5'-flap endonuclease and 5'-3' exonuclease activities involved in DNA replication and repair. During DNA replication, cleaves the 5'-overhanging flap structure that is generated by displacement synthesis when DNA polymerase encounters the 5'-end of a downstream Okazaki fragment. Binds the unpaired 3'-DNA end and kinks the DNA to facilitate 5' cleavage specificity. Cleaves one nucleotide into the double-stranded DNA from the junction in flap DNA, leaving a nick for ligation. Also involved in the base excision repair (BER) pathway. Acts as a genome stabilization factor that prevents flaps from equilibrating into structures that lead to duplications and deletions. Also possesses 5'-3' exonuclease activity on nicked or gapped double-stranded DNA. The polypeptide is Flap endonuclease 1 (Pyrococcus horikoshii (strain ATCC 700860 / DSM 12428 / JCM 9974 / NBRC 100139 / OT-3)).